Reading from the N-terminus, the 185-residue chain is Homeobox expressed in ES cells 1 (185 aa).

Positions 108–167 (GRRPRTAFTQNQIEVLENVFRVNCYPGIDIREDLAQKLNLEEDRIQIWFQNRRAKLKRSH) form a DNA-binding region, homeobox.

Belongs to the ANF homeobox family. In terms of assembly, can form heterodimers with PROP1 in binding to DNA. Interacts with TLE1.

It localises to the nucleus. In terms of biological role, required for the normal development of the forebrain, eyes and other anterior structures such as the olfactory placodes and pituitary gland. Possible transcriptional repressor. Binds to the palindromic PIII sequence, 5'-AGCTTGAGTCTAATTGAATTAACTGTAC-3'. HESX1 and PROP1 bind as heterodimers on this palindromic site, and, in vitro, HESX1 can antagonize PROP1 activation. The polypeptide is Homeobox expressed in ES cells 1 (HESX1) (Pan troglodytes (Chimpanzee)).